The chain runs to 161 residues: uncharacterized protein (161 aa).

Residues 1–10 (MSKQQEQDTP) show a composition bias toward polar residues. Disordered regions lie at residues 1–20 (MSKQ…QRLQ), 55–84 (KKTR…MSDE), and 118–161 (LLQQ…ANNS). Residues 82–107 (SDEEYARQLQEEMDRLDASIQMDKEA) are a coiled coil. Residues 144–161 (QQSSNTTTSSSCQSANNS) show a composition bias toward low complexity.

This is an uncharacterized protein from Caenorhabditis elegans.